The chain runs to 81 residues: ATP synthase subunit c, chloroplastic (81 aa).

The next 2 membrane-spanning stretches (helical) occupy residues 3-23 (PLIASASVIAAGLAVGLASIG) and 57-77 (LAFMEALTIYGLVVALALLFA).

This sequence belongs to the ATPase C chain family. F-type ATPases have 2 components, F(1) - the catalytic core - and F(0) - the membrane proton channel. F(1) has five subunits: alpha(3), beta(3), gamma(1), delta(1), epsilon(1). F(0) has four main subunits: a(1), b(1), b'(1) and c(10-14). The alpha and beta chains form an alternating ring which encloses part of the gamma chain. F(1) is attached to F(0) by a central stalk formed by the gamma and epsilon chains, while a peripheral stalk is formed by the delta, b and b' chains.

The protein resides in the plastid. It is found in the chloroplast thylakoid membrane. Its function is as follows. F(1)F(0) ATP synthase produces ATP from ADP in the presence of a proton or sodium gradient. F-type ATPases consist of two structural domains, F(1) containing the extramembraneous catalytic core and F(0) containing the membrane proton channel, linked together by a central stalk and a peripheral stalk. During catalysis, ATP synthesis in the catalytic domain of F(1) is coupled via a rotary mechanism of the central stalk subunits to proton translocation. Functionally, key component of the F(0) channel; it plays a direct role in translocation across the membrane. A homomeric c-ring of between 10-14 subunits forms the central stalk rotor element with the F(1) delta and epsilon subunits. This is ATP synthase subunit c, chloroplastic from Chaetosphaeridium globosum (Charophycean green alga).